A 147-amino-acid chain; its full sequence is Hemoglobin subunit beta (147 aa).

Residues 3–147 form the Globin domain; that stretch reads HWTAEEKQLI…VAHALARKYH (145 aa). The heme b site is built by His64 and His93.

This sequence belongs to the globin family. In terms of assembly, heterotetramer of 2 alpha (or alpha-D) and 2 beta chains. In terms of tissue distribution, red blood cells.

Functionally, involved in oxygen transport from the lung to the various peripheral tissues. The beta chain is a component of adult hemoglobin A and D. The chain is Hemoglobin subunit beta (HBB) from Gallus gallus (Chicken).